The primary structure comprises 828 residues: ADP-ribosylation factor GTPase-activating protein AGD1 (828 aa).

The 225-residue stretch at 1–225 (MHFAKLDDSP…INQVLAYAHQ (225 aa)) folds into the BAR domain. Residues 225–255 (QSRECANYEMASLNERMQEYQRQVDRETRNS) are a coiled coil. The segment at 247–268 (QVDRETRNSCVSPTGDGMRHNS) is disordered. The PH domain maps to 288-425 (QTIRQGYLSK…WIEKITGVIA (138 aa)). Phosphoserine is present on Ser441. Positions 498-643 (EKPIDVLTRV…IFVRKAIDSQ (146 aa)) constitute an Arf-GAP domain. The C4-type zinc-finger motif lies at 513-536 (CADCGAPEPDWASLNLGVLICIEC). Low complexity predominate over residues 590–600 (TSSASRSSGTP). The tract at residues 590–611 (TSSASRSSGTPKSDRPRKLLVR) is disordered. ANK repeat units lie at residues 735-764 (NDCS…KINA) and 768-797 (KGRT…DPNA).

Expressed in roots, but not in hypocotyls or cotyledons. Low levels detected in leaf and shoot apical meristems and in siliques.

Its subcellular location is the endosome. Functionally, probable GTPase-activating protein. Regulator of membrane trafficking. Required for maintaining a straight growth of root hairs. The polypeptide is ADP-ribosylation factor GTPase-activating protein AGD1 (AGD1) (Arabidopsis thaliana (Mouse-ear cress)).